A 254-amino-acid polypeptide reads, in one-letter code: ATP-dependent L-serine kinase SbnI (254 aa).

Residue E20 is part of the active site. Residue S33 coordinates ADP. Position 57 (I57) interacts with O-phospho-L-serine. Positions 58, 59, 61, and 62 each coordinate ADP. The O-phospho-L-serine site is built by G59 and H61. O-phospho-L-serine contacts are provided by W98 and R229.

As to quaternary structure, forms dimers and tetramers in solution. Predominantly forms dimers. Dimerization/oligomerization is not essential for kinase activity.

The enzyme catalyses L-serine + ATP = O-phospho-L-serine + ADP + H(+). It participates in siderophore biosynthesis. With respect to regulation, binds heme and heme binding inhibits DNA binding. Functionally, free serine kinase that uses ATP to phosphorylate L-serine to yield O-phospho-L-serine and ADP. O-phospho-L-serine serves as a substrate for SbnA and is a precursor for staphyloferrin B biosynthesis. Is also a DNA-binding regulatory protein that senses heme to control gene expression for siderophore biosynthesis. Binds to DNA within the sbnC coding region and is required for expression of genes in the sbn operon from sbnD onward. This Staphylococcus aureus (strain NCTC 8325 / PS 47) protein is ATP-dependent L-serine kinase SbnI.